The primary structure comprises 458 residues: UDP-N-acetylmuramoylalanine--D-glutamate ligase (458 aa).

An ATP-binding site is contributed by 124-130 (GSDGKTT).

The protein belongs to the MurCDEF family.

The protein resides in the cytoplasm. The enzyme catalyses UDP-N-acetyl-alpha-D-muramoyl-L-alanine + D-glutamate + ATP = UDP-N-acetyl-alpha-D-muramoyl-L-alanyl-D-glutamate + ADP + phosphate + H(+). It functions in the pathway cell wall biogenesis; peptidoglycan biosynthesis. Its function is as follows. Cell wall formation. Catalyzes the addition of glutamate to the nucleotide precursor UDP-N-acetylmuramoyl-L-alanine (UMA). This Clostridium botulinum (strain Loch Maree / Type A3) protein is UDP-N-acetylmuramoylalanine--D-glutamate ligase.